A 1051-amino-acid polypeptide reads, in one-letter code: Carbamoyl phosphate synthase large chain (1051 aa).

Residues 1–399 (MRETPKKVLV…SLQKAIRMLD (399 aa)) are carboxyphosphate synthetic domain. 12 residues coordinate ATP: R127, R167, G173, G174, K206, L208, E213, G239, V240, H241, Q282, and E296. The region spanning 131-325 (RETMIENNLP…LAYVSAKLAL (195 aa)) is the ATP-grasp 1 domain. Residues Q282, E296, and N298 each contribute to the Mg(2+) site. Mn(2+)-binding residues include Q282, E296, and N298. The segment at 400–548 (IGEPGVVGGK…LTYNGTEDDI (149 aa)) is oligomerization domain. The segment at 549-930 (EFSQGNKLLI…LKSWLSSMPN (382 aa)) is carbamoyl phosphate synthetic domain. Positions 673–863 (SKLLDKLGIS…LINESMKAIF (191 aa)) constitute an ATP-grasp 2 domain. Residues R709, K748, I750, E755, G779, V780, H781, S782, Q822, and E834 each coordinate ATP. Mg(2+)-binding residues include Q822, E834, and N836. Residues Q822, E834, and N836 each contribute to the Mn(2+) site. The 122-residue stretch at 930-1051 (NRIPNKNGIA…FEISEYGGGI (122 aa)) folds into the MGS-like domain. The interval 931-1051 (RIPNKNGIAL…FEISEYGGGI (121 aa)) is allosteric domain.

The protein belongs to the CarB family. In terms of assembly, composed of two chains; the small (or glutamine) chain promotes the hydrolysis of glutamine to ammonia, which is used by the large (or ammonia) chain to synthesize carbamoyl phosphate. Tetramer of heterodimers (alpha,beta)4. It depends on Mg(2+) as a cofactor. Mn(2+) is required as a cofactor.

The catalysed reaction is hydrogencarbonate + L-glutamine + 2 ATP + H2O = carbamoyl phosphate + L-glutamate + 2 ADP + phosphate + 2 H(+). It carries out the reaction hydrogencarbonate + NH4(+) + 2 ATP = carbamoyl phosphate + 2 ADP + phosphate + 2 H(+). The protein operates within amino-acid biosynthesis; L-arginine biosynthesis; carbamoyl phosphate from bicarbonate: step 1/1. It participates in pyrimidine metabolism; UMP biosynthesis via de novo pathway; (S)-dihydroorotate from bicarbonate: step 1/3. In terms of biological role, large subunit of the glutamine-dependent carbamoyl phosphate synthetase (CPSase). CPSase catalyzes the formation of carbamoyl phosphate from the ammonia moiety of glutamine, carbonate, and phosphate donated by ATP, constituting the first step of 2 biosynthetic pathways, one leading to arginine and/or urea and the other to pyrimidine nucleotides. The large subunit (synthetase) binds the substrates ammonia (free or transferred from glutamine from the small subunit), hydrogencarbonate and ATP and carries out an ATP-coupled ligase reaction, activating hydrogencarbonate by forming carboxy phosphate which reacts with ammonia to form carbamoyl phosphate. This is Carbamoyl phosphate synthase large chain from Saccharolobus solfataricus (strain ATCC 35092 / DSM 1617 / JCM 11322 / P2) (Sulfolobus solfataricus).